The primary structure comprises 347 residues: Probable arabinogalactan endo-beta-1,4-galactanase A (347 aa).

The N-terminal stretch at 1-16 is a signal peptide; the sequence is MLFSYLLATLPLLANA. The Proton donor role is filled by Glu150. Glu260 acts as the Nucleophile in catalysis.

This sequence belongs to the glycosyl hydrolase 53 family.

The protein localises to the secreted. The enzyme catalyses The enzyme specifically hydrolyzes (1-&gt;4)-beta-D-galactosidic linkages in type I arabinogalactans.. In terms of biological role, endogalactanase involved in the degradation of plant cell wall polysaccharides, and more particularly of hairy regions of pectin. The polypeptide is Probable arabinogalactan endo-beta-1,4-galactanase A (galA) (Aspergillus flavus (strain ATCC 200026 / FGSC A1120 / IAM 13836 / NRRL 3357 / JCM 12722 / SRRC 167)).